The sequence spans 193 residues: MPNWGGGKKCGVCQKTVYFAEEVQCEGSSFHKSCFLCLVCKKNLDSTTVAVHGEEIYCKSCYGKKYGPKGYGYGQGAGTLSMDKGESLGIRHEEAPGHRPTTNPNTSKFAQKVGGSERCPRCSQAVYAAEKVIGAGKSWHKSCFRCAKCGKGLESTTLADKDGEIYCKGCYAKNFGPKGFGFGQGAGALVHSE.

One can recognise an LIM zinc-binding 1 domain in the interval Cys10 to Cys61. The Nuclear localization signal signature appears at Lys64–Lys69. The residue at position 81 (Ser81) is a Phosphoserine. N6-acetyllysine occurs at positions 84, 112, 131, 137, and 161. An LIM zinc-binding 2 domain is found at Cys119–Cys170. Ser192 is subject to Phosphoserine.

As to quaternary structure, interacts with ASCC1; ASCC2 and TRIP4.

The protein resides in the nucleus. Its function is as follows. Could play a role in neuronal development. In Bos taurus (Bovine), this protein is Cysteine and glycine-rich protein 1 (CSRP1).